The chain runs to 594 residues: Spindle pole body-associated protein CIK1 (594 aa).

The interval 1–29 (MNNSKIPKLSFHSDPNNVTRDFPKTKRQK) is disordered. Residues 81–360 (IERVKNNERK…VNELEKVQQE (280 aa)) are a coiled coil.

Interacts with KAR3; the interaction is direct.

It localises to the nucleus. Its subcellular location is the cytoplasm. The protein resides in the cytoskeleton. It is found in the microtubule organizing center. The protein localises to the spindle pole body. It localises to the spindle. Together with the minus end-directed microtubule motor KAR3, involved in spindle midzone assembly, karyogamy (nuclear fusion) during mating, and with an essential function in meiosis I. To contribute to spindle midzone assembly during mitotic metaphase, the KAR3-CIK1 motor cross-links anti-parallel microtubules to align them on the spindle axis; as the motor travels polewards splayed microtubules are pulled into alignment. During the karyogamy (nuclear fusion) step of mating, KAR3-CIK1 cross-links antiparallel cytoplasmic microtubules emanating from the spindle pole bodies of mating partners; the motor activity of KAR3 creates the force that pulls the nuclei together by sliding cross-linked microtubules past one another. KAR3-CIK1 promotes microtubule shortening predominantly from the microtubule plus-end. Required for interhomolog recombination, synapsis of homologous chromosomes and establishment of a meiosis I spindle. This chain is Spindle pole body-associated protein CIK1 (CIK1), found in Saccharomyces cerevisiae (strain ATCC 204508 / S288c) (Baker's yeast).